The sequence spans 423 residues: G2/mitotic-specific cyclin-B1 (423 aa).

S116 is subject to Phosphoserine; by CDK1. At S118 the chain carries Phosphoserine. Residue S123 is modified to Phosphoserine; by PLK1. S137 bears the Phosphoserine mark. Interaction with CDK2 stretches follow at residues 159 to 167 (EYVKDIYAY) and 248 to 251 (YEEM). T311 is subject to Phosphothreonine.

It belongs to the cyclin family. Cyclin AB subfamily. As to quaternary structure, interacts with the CDC2 protein kinase to form a serine/threonine kinase holoenzyme complex also known as maturation promoting factor (MPF). The cyclin subunit imparts substrate specificity to the complex. Binds HEI10. Interacts with catalytically active RALBP1 and CDC2 during mitosis to form an endocytotic complex during interphase. Interacts with CCNF; interaction is required for nuclear localization. Interacts with CDK5RAP3. Interacts with RFPL4A and UBE2A. Interacts with INCA1. In terms of processing, ubiquitinated by the SCF(NIPA) complex during interphase, leading to its destruction. Deubiquitinated by USP22 during G2/M phase. Phosphorylated by PLK1 at Ser-123 on centrosomes during prophase: phosphorylation by PLK1 does not cause nuclear import. Phosphorylation at Ser-137 was also reported to be mediated by PLK1 but Ser-123 seems to be the primary phosphorylation site.

The protein resides in the cytoplasm. The protein localises to the nucleus. It localises to the cytoskeleton. It is found in the microtubule organizing center. Its subcellular location is the centrosome. In terms of biological role, essential for the control of the cell cycle at the G2/M (mitosis) transition. This Rattus norvegicus (Rat) protein is G2/mitotic-specific cyclin-B1 (Ccnb1).